The sequence spans 234 residues: Orotidine 5'-phosphate decarboxylase (234 aa).

Substrate-binding positions include aspartate 10, lysine 31, 58–67 (DLKLHDIPNT), threonine 121, arginine 183, glutamine 192, glycine 212, and arginine 213. Catalysis depends on lysine 60, which acts as the Proton donor.

The protein belongs to the OMP decarboxylase family. Type 1 subfamily. In terms of assembly, homodimer.

It catalyses the reaction orotidine 5'-phosphate + H(+) = UMP + CO2. Its pathway is pyrimidine metabolism; UMP biosynthesis via de novo pathway; UMP from orotate: step 2/2. Functionally, catalyzes the decarboxylation of orotidine 5'-monophosphate (OMP) to uridine 5'-monophosphate (UMP). This is Orotidine 5'-phosphate decarboxylase from Halalkalibacterium halodurans (strain ATCC BAA-125 / DSM 18197 / FERM 7344 / JCM 9153 / C-125) (Bacillus halodurans).